A 387-amino-acid polypeptide reads, in one-letter code: Cystathionine gamma-lyase (387 aa).

3 residues coordinate substrate: Arg-53, Tyr-105, and Arg-110. Lys-202 bears the N6-(pyridoxal phosphate)lysine mark. Glu-329 lines the substrate pocket.

Belongs to the trans-sulfuration enzymes family. Homotetramer. Interacts with CALM in a calcium-dependent manner. It depends on pyridoxal 5'-phosphate as a cofactor.

The protein resides in the cytoplasm. The enzyme catalyses L,L-cystathionine + H2O = 2-oxobutanoate + L-cysteine + NH4(+). It catalyses the reaction L-cysteine + H2O = hydrogen sulfide + pyruvate + NH4(+) + H(+). It carries out the reaction L-homocysteine + H2O = 2-oxobutanoate + hydrogen sulfide + NH4(+) + H(+). The catalysed reaction is L-homoserine = 2-oxobutanoate + NH4(+). It participates in amino-acid biosynthesis; L-cysteine biosynthesis; L-cysteine from L-homocysteine and L-serine: step 2/2. Its function is as follows. Catalyzes the last step in the trans-sulfuration pathway from L-methionine to L-cysteine in a pyridoxal-5'-phosphate (PLP)-dependent manner, which consists on cleaving the L,L-cystathionine molecule into L-cysteine, ammonia and 2-oxobutanoate. Part of the L-cysteine derived from the trans-sulfuration pathway is utilized for biosynthesis of the ubiquitous antioxidant glutathione. Besides its role in the conversion of L-cystathionine into L-cysteine, it utilizes L-cysteine and L-homocysteine as substrates (at much lower rates than L,L-cystathionine) to produce the endogenous gaseous signaling molecule hydrogen sulfide (H2S). The protein is Cystathionine gamma-lyase (cysA) of Dictyostelium discoideum (Social amoeba).